Consider the following 341-residue polypeptide: S-adenosylmethionine:tRNA ribosyltransferase-isomerase (341 aa).

Belongs to the QueA family. In terms of assembly, monomer.

It localises to the cytoplasm. It carries out the reaction 7-aminomethyl-7-carbaguanosine(34) in tRNA + S-adenosyl-L-methionine = epoxyqueuosine(34) in tRNA + adenine + L-methionine + 2 H(+). It functions in the pathway tRNA modification; tRNA-queuosine biosynthesis. Transfers and isomerizes the ribose moiety from AdoMet to the 7-aminomethyl group of 7-deazaguanine (preQ1-tRNA) to give epoxyqueuosine (oQ-tRNA). This is S-adenosylmethionine:tRNA ribosyltransferase-isomerase from Clostridium perfringens (strain SM101 / Type A).